The sequence spans 451 residues: Aspartate aminotransferase, mitochondrial (451 aa).

Positions 52, 155, and 216 each coordinate L-aspartate. Lys286 is subject to N6-(pyridoxal phosphate)lysine. Arg423 contributes to the L-aspartate binding site.

The protein belongs to the class-I pyridoxal-phosphate-dependent aminotransferase family. Homodimer. Pyridoxal 5'-phosphate serves as cofactor.

The protein resides in the mitochondrion matrix. It catalyses the reaction L-aspartate + 2-oxoglutarate = oxaloacetate + L-glutamate. Its function is as follows. Plays a key role in amino acid metabolism. Important for metabolite exchange between mitochondria and cytosol. The chain is Aspartate aminotransferase, mitochondrial (AAT1) from Saccharomyces cerevisiae (strain ATCC 204508 / S288c) (Baker's yeast).